Reading from the N-terminus, the 316-residue chain is Geminin coiled-coil domain-containing protein 1 (316 aa).

Positions 82–117 (QISANKQLQDTLLQKEEELSRLHEENNKLKEFLNSA) form a coiled coil. Polar residues-rich tracts occupy residues 134 to 155 (GQSS…STPG) and 207 to 234 (MSLQ…QAAT). 2 disordered regions span residues 134–160 (GQSS…KAKR) and 207–269 (MSLQ…DVAP). Thr-153 is modified (phosphothreonine; by cdk2). Residues 235 to 252 (SCSLSPSQCSSASLPESE) are compositionally biased toward low complexity. Residues 253 to 262 (TASPLSSPTY) show a composition bias toward polar residues.

It belongs to the GEMC1 family. As to quaternary structure, interacts with topbp1. Interacts with Cdc45l and the kinase cdk2-cyclin-E (the interaction is direct). Highly phosphorylated by cdk2; stimulates initiation of DNA replication. Expressed in most tissues. Enriched in proliferating cells from skin and gut.

The protein resides in the nucleus. Regulator of DNA replication. Promotes initiation of chromosomal DNA replication by mediating topbp1- and cdk2-dependent recruitment of cdc45l onto replication origins. In Xenopus laevis (African clawed frog), this protein is Geminin coiled-coil domain-containing protein 1 (gmnc).